Consider the following 483-residue polypeptide: Altronate oxidoreductase (483 aa).

18-29 serves as a coordination point for NAD(+); sequence IIQFGEGNFLRA.

This sequence belongs to the mannitol dehydrogenase family. UxaB subfamily.

It catalyses the reaction D-altronate + NAD(+) = keto-D-tagaturonate + NADH + H(+). It participates in carbohydrate metabolism; pentose and glucuronate interconversion. The protein is Altronate oxidoreductase of Escherichia coli O7:K1 (strain IAI39 / ExPEC).